A 366-amino-acid chain; its full sequence is uncharacterized protein (366 aa).

This is an uncharacterized protein from Methanocaldococcus jannaschii (strain ATCC 43067 / DSM 2661 / JAL-1 / JCM 10045 / NBRC 100440) (Methanococcus jannaschii).